The following is an 819-amino-acid chain: Zinc finger protein 658B (819 aa).

The segment at 141 to 166 adopts a C2H2-type 1; degenerate zinc-finger fold; it reads YLSDEHGKCRKSFYWKAHLIQHERPH. C2H2-type zinc fingers lie at residues 200-222, 278-300, 306-328, 334-356, 362-384, 390-412, 418-440, 446-468, 474-496, 502-524, 530-552, 558-580, 586-608, and 614-636; these read YECN…LRIH, YECI…QRIH, YECV…QRVH, YECN…QRIH, YECS…HRIH, YECS…QRIH, YKCN…QNIH, YECS…RRIH, YECS…ERIH, and YECN…HRIH. Residues 642–664 form a C2H2-type 16; degenerate zinc finger; that stretch reads YECNDCGKTFSKTSHLRAHLRTR. 5 C2H2-type zinc fingers span residues 670 to 692, 698 to 720, 726 to 748, 754 to 776, and 782 to 805; these read YECS…QRVH, YECN…QRIH, and YECD…TRMH.

The protein belongs to the krueppel C2H2-type zinc-finger protein family.

The protein localises to the nucleus. In terms of biological role, may be involved in transcriptional regulation. This chain is Zinc finger protein 658B (ZNF658B), found in Homo sapiens (Human).